A 465-amino-acid polypeptide reads, in one-letter code: Histidine--tRNA ligase (465 aa).

The protein belongs to the class-II aminoacyl-tRNA synthetase family. As to quaternary structure, homodimer.

The protein localises to the cytoplasm. The catalysed reaction is tRNA(His) + L-histidine + ATP = L-histidyl-tRNA(His) + AMP + diphosphate + H(+). This Pelagibacter ubique (strain HTCC1062) protein is Histidine--tRNA ligase (hisS).